The primary structure comprises 159 residues: Transcriptional repressor NrdR (159 aa).

Residues 3-34 (CPFCEYNGTRVLDSRPFNHNKSIRRRRECEAC) fold into a zinc finger. An ATP-cone domain is found at 49–139 (LLIVKKDGTR…VYRQFKDINV (91 aa)).

It belongs to the NrdR family. It depends on Zn(2+) as a cofactor.

Its function is as follows. Negatively regulates transcription of bacterial ribonucleotide reductase nrd genes and operons by binding to NrdR-boxes. The chain is Transcriptional repressor NrdR from Brevibacillus brevis (strain 47 / JCM 6285 / NBRC 100599).